The sequence spans 363 residues: 3-dehydroquinate synthase (363 aa).

Residues 134 to 135, Lys147, and Lys156 contribute to the NAD(+) site; that span reads TT. 3 residues coordinate Zn(2+): Glu189, His254, and His271.

The protein belongs to the sugar phosphate cyclases superfamily. Dehydroquinate synthase family. Co(2+) serves as cofactor. The cofactor is Zn(2+). Requires NAD(+) as cofactor.

The protein resides in the cytoplasm. It catalyses the reaction 7-phospho-2-dehydro-3-deoxy-D-arabino-heptonate = 3-dehydroquinate + phosphate. It functions in the pathway metabolic intermediate biosynthesis; chorismate biosynthesis; chorismate from D-erythrose 4-phosphate and phosphoenolpyruvate: step 2/7. Functionally, catalyzes the conversion of 3-deoxy-D-arabino-heptulosonate 7-phosphate (DAHP) to dehydroquinate (DHQ). The sequence is that of 3-dehydroquinate synthase from Prochlorococcus marinus (strain MIT 9215).